The sequence spans 488 residues: MITLFDSAKKQKIPFTPIQDNQIRLYVCGPTVYDDAHLGHARSSIVFDLWRRLFLFLGFEVVFVKNFTDIDDKIIKKSLQNNASVQEIGSHYIHSYLKDMASLGVLRADIEPKATDNLPQMCEMIQTLLHKGYAYEGENSDIYLRIHKDKNYGALSQRLEQSHTQSRIQNAQDKLEHNDFALWKGYKGENDIAYDSPFGKGRPGWHIECSAMIEKHLAYQNEEYGIDIHAGGSDLLFPHHENEASQTRCATGREIAKYWLHNGFVNINGEKMSKSLGNSFFIKDALKVYDGEILRNYLLGVHYRLALNFNEEDLLQSKKRLDKLYRLKKRVIESHIQSPQITREEIKQFTHNIKETAKEAHKTFLSSLVEALSDDYNISKALSIIEDMLSTSNEYLDKNPKDKAYKQAIKANLACIEFLLGLGGKSTQSYFQLGLDEKTKQEIESKIAKRQEAKAQKNYALADKLRDELKSQGIEIMDTPQGSTWEKI.

C28 is a Zn(2+) binding site. The 'HIGH' region signature appears at 30-40 (PTVYDDAHLGH). Zn(2+) contacts are provided by C209, H239, and E243. The 'KMSKS' region motif lies at 271-275 (KMSKS). An ATP-binding site is contributed by K274.

Belongs to the class-I aminoacyl-tRNA synthetase family. In terms of assembly, monomer. It depends on Zn(2+) as a cofactor.

Its subcellular location is the cytoplasm. The catalysed reaction is tRNA(Cys) + L-cysteine + ATP = L-cysteinyl-tRNA(Cys) + AMP + diphosphate. This is Cysteine--tRNA ligase from Helicobacter hepaticus (strain ATCC 51449 / 3B1).